Reading from the N-terminus, the 790-residue chain is Nitrogen permease reactivator protein (790 aa).

The segment at 1-68 (MSSLTRLLQE…DRNRANVPVP (68 aa)) is disordered. Over residues 16-38 (TSNSSPRTSADTLTTTPESQSLD) the composition is skewed to polar residues. The span at 46 to 58 (SSHIGSVSNSSSS) shows a compositional bias: low complexity. Serine 47 carries the post-translational modification Phosphoserine; by autocatalysis. Serine 85, serine 90, serine 100, serine 111, serine 116, serine 125, serine 137, and serine 141 each carry phosphoserine. The segment covering 151 to 175 (RLSTTSHTSGRAIPSLSSSIPYSVP) has biased composition (polar residues). Disordered stretches follow at residues 151 to 188 (RLSTTSHTSGRAIPSLSSSIPYSVPNSNKDNNSSNSNS) and 234 to 258 (LQKASMDSNNANATQSRSISRSGSF). Residues 176–188 (NSNKDNNSSNSNS) are compositionally biased toward low complexity. Residues 238–248 (SMDSNNANATQ) are compositionally biased toward polar residues. The segment covering 249–258 (SRSISRSGSF) has biased composition (low complexity). Serine 257 carries the phosphoserine; by autocatalysis modification. Residues serine 259, serine 260, serine 288, serine 292, serine 317, serine 320, and serine 328 each carry the phosphoserine modification. The span at 276-289 (NSNSAGMSFSANSN) shows a compositional bias: low complexity. Residues 276–357 (NSNSAGMSFS…QSVPRSQHSS (82 aa)) form a disordered region. Polar residues-rich tracts occupy residues 290 to 305 (GPSPNIKNPNVTNGST), 314 to 339 (RQSSIYSASRQPTGSYTDNFYGSPSS), and 346 to 357 (PSQSVPRSQHSS). A Phosphotyrosine modification is found at tyrosine 334. Phosphoserine occurs at positions 336, 353, and 356. At serine 357 the chain carries Phosphoserine; by autocatalysis. A Phosphoserine modification is found at serine 385. The Protein kinase domain occupies 438–742 (IKTGADLGAG…IEEIMEDPWI (305 aa)). ATP is bound by residues 444-452 (LGAGAGGSV) and lysine 467. Catalysis depends on aspartate 561, which acts as the Proton acceptor. 2 disordered regions span residues 666–704 (LVTRTPDPPSYDESHSTEKKKPESSSNNVSDPNNVNIGP) and 766–790 (HHTQVDQSEAHIAGLEKKKKKQNNQ). Residues 677–688 (DESHSTEKKKPE) are compositionally biased toward basic and acidic residues. The span at 689–701 (SSSNNVSDPNNVN) shows a compositional bias: low complexity.

This sequence belongs to the protein kinase superfamily. Ser/Thr protein kinase family. Interacts with TIP41. In terms of processing, hyperphosphorylated in nitrogen-rich growth medium. Nitrogen limitation (or rapamycin treatment) leads to substantial, though not complete dephosphorylation. Autophosphorylation plays only a minor role and seems not to be regulated by the quality of the nitrogen source.

The protein resides in the cytoplasm. The catalysed reaction is L-seryl-[protein] + ATP = O-phospho-L-seryl-[protein] + ADP + H(+). It catalyses the reaction L-threonyl-[protein] + ATP = O-phospho-L-threonyl-[protein] + ADP + H(+). Its activity is regulated as follows. Dephosphorylation by SIT4 activates NPR1 kinase activity. Functionally, nutrient-regulated protein kinase that promotes the activity of at least 6 distinct transport systems for nitrogenous nutrients under conditions of nitrogen catabolite derepression. Under poor nitrogen growth conditions, required for post-Golgi sorting of the general amino acid permease GAP1 and the three known ammonia permeases, MEP1/2/3, to the plasma membrane. Also contributes to the stability and the retention of GAP1 at the plasma membrane. Inversely, promotes the degradation of tryptophan permease TAT2 under the same conditions. Activity is regulated by the TOR signaling pathway via phosphatase SIT4. Although thought to be involved in regulation of GLN3-dependent transcription by nitrogen catabolite repression, this seems to be an indirect effect from the reduced uptake of the nitrogen-repressing compound. This chain is Nitrogen permease reactivator protein (NPR1), found in Saccharomyces cerevisiae (strain ATCC 204508 / S288c) (Baker's yeast).